A 71-amino-acid polypeptide reads, in one-letter code: Large ribosomal subunit protein bL31 (71 aa).

The Zn(2+) site is built by cysteine 16, cysteine 18, cysteine 37, and cysteine 40.

Belongs to the bacterial ribosomal protein bL31 family. Type A subfamily. In terms of assembly, part of the 50S ribosomal subunit. The cofactor is Zn(2+).

Functionally, binds the 23S rRNA. The chain is Large ribosomal subunit protein bL31 from Nitratidesulfovibrio vulgaris (strain DSM 19637 / Miyazaki F) (Desulfovibrio vulgaris).